Reading from the N-terminus, the 900-residue chain is Chromodomain-helicase-DNA-binding protein 1-like (900 aa).

Positions 52 to 217 (VQCFHCQNGC…YSLLCVVEPD (166 aa)) constitute a Helicase ATP-binding domain. Residue 65–72 (DEMGLGKT) coordinates ATP. The short motif at 168–171 (DEAH) is the DEAH box element. Residues 345–507 (LLDRLLAFLY…QKPSAEADFQ (163 aa)) enclose the Helicase C-terminal domain. Position 534 is a phosphoserine (S534). Residues 546–569 (PDALPAAAAAGGGSLEPEEGSELE) are disordered. The tract at residues 606–640 (TLLEKTSHGGRTLRNKGSVLIPGLAEGPIKRKKIL) is regulatory linker segment (RLS). Phosphoserine occurs at positions 612, 623, and 641. Residues 620 to 678 (NKGSVLIPGLAEGPIKRKKILSPEELEDRRKKRQEAAAKRKRLMEEKRKEKEEAEHRKK) form a required for ATPase activity region. Residues 641 to 673 (SPEELEDRRKKRQEAAAKRKRLMEEKRKEKEEA) are disordered. Residues 643 to 680 (EELEDRRKKRQEAAAKRKRLMEEKRKEKEEAEHRKKMA) are a coiled coil. Basic and acidic residues predominate over residues 653-673 (QEAAAKRKRLMEEKRKEKEEA). The region spanning 709 to 900 (SAELAYEDLD…ASSSSAPLVP (192 aa)) is the Macro domain. Position 894 is a phosphoserine (S894).

The protein belongs to the SNF2/RAD54 helicase family. Interacts with nucleosomes; interacts with the acidic patch of histones. Interacts (via macro domain) with PARP1; interacts only when PARP1 is poly-ADP-ribosylated (PARylated). Interacts with CIAO1.

It is found in the nucleus. The protein resides in the chromosome. It carries out the reaction ATP + H2O = ADP + phosphate + H(+). With respect to regulation, adopts an inactive conformation in absence of DNA damage. Binding to poly-ADP-ribosylated histones activates the ATP-dependent chromatin remodeler activity. Functionally, ATP-dependent chromatin remodeler that mediates chromatin-remodeling following DNA damage. Recruited to DNA damage sites through interaction with poly-ADP-ribose: specifically recognizes and binds histones that are poly-ADP-ribosylated on serine residues in response to DNA damage. Poly-ADP-ribose-binding activates the ATP-dependent chromatin remodeler activity, thereby regulating chromatin during DNA repair. Catalyzes nucleosome sliding away from DNA breaks in an ATP-dependent manner. Chromatin remodeling activity promotes PARP2 removal from chromatin. This is Chromodomain-helicase-DNA-binding protein 1-like (Chd1l) from Mus musculus (Mouse).